A 307-amino-acid chain; its full sequence is N-acetylmuramic acid 6-phosphate etherase (307 aa).

The SIS domain maps to 62 to 225 (VVDAFRVGGR…TTASMIRIGK (164 aa)). Glutamate 90 serves as the catalytic Proton donor. Glutamate 121 is a catalytic residue.

This sequence belongs to the GCKR-like family. MurNAc-6-P etherase subfamily. Homodimer.

It carries out the reaction N-acetyl-D-muramate 6-phosphate + H2O = N-acetyl-D-glucosamine 6-phosphate + (R)-lactate. The protein operates within amino-sugar metabolism; 1,6-anhydro-N-acetylmuramate degradation. Its pathway is amino-sugar metabolism; N-acetylmuramate degradation. It functions in the pathway cell wall biogenesis; peptidoglycan recycling. Specifically catalyzes the cleavage of the D-lactyl ether substituent of MurNAc 6-phosphate, producing GlcNAc 6-phosphate and D-lactate. Together with AnmK, is also required for the utilization of anhydro-N-acetylmuramic acid (anhMurNAc) either imported from the medium or derived from its own cell wall murein, and thus plays a role in cell wall recycling. In Brucella anthropi (strain ATCC 49188 / DSM 6882 / CCUG 24695 / JCM 21032 / LMG 3331 / NBRC 15819 / NCTC 12168 / Alc 37) (Ochrobactrum anthropi), this protein is N-acetylmuramic acid 6-phosphate etherase.